Here is a 184-residue protein sequence, read N- to C-terminus: Signal peptidase complex catalytic subunit SEC11 (184 aa).

The Cytoplasmic portion of the chain corresponds to 1-28 (MDFIKEQYNSLVLDLRKTFRNKRDGLSH). The helical; Signal-anchor for type II membrane protein transmembrane segment at 29–49 (ILNVICLLLNALMIWKLLVVF) threads the bilayer. The Lumenal segment spans residues 50–184 (TGCESPVVVV…MLIMILMGYE (135 aa)). Catalysis depends on charge relay system residues serine 63, histidine 101, and aspartate 127. The segment at 170–181 (AIVSIMLIMILM) is C-terminal short (CTS) helix.

It belongs to the peptidase S26B family. In terms of assembly, component of the signal peptidase complex (SPC) composed of a catalytic subunit SEC11/SPC21 and three accessory subunits SPC25, SPC3/SPC22, SPC1/SPC12. Within the complex, interacts with SPC25. The complex induces a local thinning of the ER membrane which is used to measure the length of the signal peptide (SP) h-region of protein substrates. This ensures the selectivity of the complex towards h-regions shorter than 18-20 amino acids. The complex interacts with the SEC61 channel-forming translocon complex and is involved in the import of classical signal sequence-containing proteins. In terms of processing, phosphorylated. Phosphorylation increases catalytic activity.

The protein resides in the endoplasmic reticulum membrane. The enzyme catalyses Cleavage of hydrophobic, N-terminal signal or leader sequences from secreted and periplasmic proteins.. With respect to regulation, phosphorylation increases catalytic activity. Ca(2+) slightly increases catalytic activity in vitro. Its function is as follows. Catalytic component of the signal peptidase complex (SPC) which catalyzes the cleavage of N-terminal signal sequences from nascent proteins as they are translocated into the lumen of the endoplasmic reticulum. Specifically cleaves N-terminal signal peptides that contain a hydrophobic alpha-helix (h-region) shorter than 18-20 amino acids. In Plasmodium falciparum (isolate 3D7), this protein is Signal peptidase complex catalytic subunit SEC11.